The chain runs to 137 residues: MQIADQSKRVVYLGTGRRKSAVARVRLIPGSGQLWINGRNGADYLQNNPIYLNLVKAPLETLGLENSYDIYVNATGGGLTGQADAIRLGIARALCQLDIENRKPLKTEGYLTRDPRAKERRKYGLRKARKAPQYSKR.

Basic and acidic residues predominate over residues 106–117; sequence KTEGYLTRDPRA. Positions 106 to 137 are disordered; that stretch reads KTEGYLTRDPRAKERRKYGLRKARKAPQYSKR. The segment covering 118 to 137 has biased composition (basic residues); the sequence is KERRKYGLRKARKAPQYSKR.

This sequence belongs to the universal ribosomal protein uS9 family.

This chain is Small ribosomal subunit protein uS9, found in Thermosynechococcus vestitus (strain NIES-2133 / IAM M-273 / BP-1).